The primary structure comprises 469 residues: Interstitial collagenase (469 aa).

Positions 1-19 (MFSLLLLLLLLCNTGSHGF) are cleaved as a signal peptide. The propeptide at 20–99 (PAATSETQEQ…PRCGVPDVAE (80 aa)) is activation peptide. Phosphoserine is present on serine 57. The Cysteine switch motif lies at 90–97 (PRCGVPDV). Cysteine 92 is a binding site for Zn(2+). A glycan (N-linked (GlcNAc...) asparagine) is linked at asparagine 120. The Ca(2+) site is built by aspartate 124 and aspartate 158. Zn(2+)-binding residues include histidine 168 and aspartate 170. 4 residues coordinate Ca(2+): aspartate 175, glycine 176, glycine 178, and asparagine 180. Zn(2+) is bound at residue histidine 183. Residues glycine 190, glycine 192, and aspartate 194 each coordinate Ca(2+). Histidine 196 lines the Zn(2+) pocket. Ca(2+)-binding residues include aspartate 198, glutamate 199, and glutamate 201. Histidine 218 contacts Zn(2+). Glutamate 219 is a catalytic residue. Positions 222 and 228 each coordinate Zn(2+). Threonine 274 carries the post-translational modification Phosphothreonine. Hemopexin repeat units follow at residues 275 to 324 (PQVC…WPQV), 325 to 371 (PNGL…FGFP), 374 to 422 (VKNI…FPGI), and 423 to 466 (GNKV…WFNC). Cysteine 278 and cysteine 466 are disulfide-bonded. Aspartate 285 and glutamine 329 together coordinate Ca(2+). The residue at position 360 (tyrosine 360) is a Phosphotyrosine; by PKDCC. Ca(2+) is bound by residues aspartate 378 and aspartate 427.

This sequence belongs to the peptidase M10A family. The cofactor is Ca(2+). Zn(2+) is required as a cofactor. Undergoes autolytic cleavage to produce a N-terminal fragment having reduced collagenolytic activity. Post-translationally, tyrosine phosphorylated in platelets by PKDCC/VLK.

It localises to the secreted. Its subcellular location is the extracellular space. It is found in the extracellular matrix. The enzyme catalyses Cleavage of the triple helix of collagen at about three-quarters of the length of the molecule from the N-terminus, at 775-Gly-|-Ile-776 in the alpha1(I) chain. Cleaves synthetic substrates and alpha-macroglobulins at bonds where P1' is a hydrophobic residue.. Can be activated without removal of the activation peptide. In terms of biological role, cleaves collagens of types I, II, and III at one site in the helical domain. Also cleaves collagens of types VII and X. This chain is Interstitial collagenase (MMP1), found in Sus scrofa (Pig).